We begin with the raw amino-acid sequence, 293 residues long: Protein transport protein yif1 (293 aa).

Topologically, residues 1-139 are cytoplasmic; that stretch reads MPPKLYHPQP…PPAEDLNSPD (139 aa). The helical transmembrane segment at 140–160 threads the bilayer; it reads MYIPLMAFTTHILLLCALAGL. Over 161-175 the chain is Lumenal; sequence QDDFQPELFGLRASK. A helical transmembrane segment spans residues 176–196; that stretch reads ACAVVLVEFLATRLGCYLLNI. Residues 197 to 201 lie on the Cytoplasmic side of the membrane; sequence SSQSQ. Residues 202-222 form a helical membrane-spanning segment; it reads VLDLLAFSGYKFVGLILTSLS. Residues 223-226 lie on the Lumenal side of the membrane; it reads KLFE. Residues 227-247 traverse the membrane as a helical segment; the sequence is MPWVTRFVFLYMYLATAFFLL. Topologically, residues 248–271 are cytoplasmic; it reads RSLKYAVLPESTMAINATITSHQR. A helical transmembrane segment spans residues 272 to 292; the sequence is SRRIYFLFFIAASQILFMYVL. S293 is a topological domain (lumenal).

The protein belongs to the YIF1 family. Component of the yip1-yif1 complex, composed of at least yif1, yip1 and yos1. The complex interacts with the ER to Golgi SNAREs bos1 and sec22.

Its subcellular location is the endoplasmic reticulum membrane. The protein resides in the golgi apparatus membrane. It is found in the cytoplasmic vesicle. It localises to the COPII-coated vesicle. Its function is as follows. Required for fusion of ER-derived vesicles with the Golgi during ER-to-Golgi protein transport. May be involved in proper membrane localization of Rab GTPases. The sequence is that of Protein transport protein yif1 from Schizosaccharomyces pombe (strain 972 / ATCC 24843) (Fission yeast).